Here is a 463-residue protein sequence, read N- to C-terminus: Fumarate hydratase class II (463 aa).

Residues S98–T100, H129–D132, S139–N141, and T187 contribute to the substrate site. Residue H188 is the Proton donor/acceptor of the active site. S318 is an active-site residue. Residues S319 and K324–N326 each bind substrate.

This sequence belongs to the class-II fumarase/aspartase family. Fumarase subfamily. In terms of assembly, homotetramer.

The protein localises to the cytoplasm. The enzyme catalyses (S)-malate = fumarate + H2O. It functions in the pathway carbohydrate metabolism; tricarboxylic acid cycle; (S)-malate from fumarate: step 1/1. Functionally, involved in the TCA cycle. Catalyzes the stereospecific interconversion of fumarate to L-malate. This chain is Fumarate hydratase class II, found in Caulobacter vibrioides (strain ATCC 19089 / CIP 103742 / CB 15) (Caulobacter crescentus).